The sequence spans 255 residues: Triosephosphate isomerase (255 aa).

Position 9–11 (9–11) interacts with substrate; that stretch reads NWK. H95 acts as the Electrophile in catalysis. E167 functions as the Proton acceptor in the catalytic mechanism. Substrate-binding positions include G173, S212, and 233–234; that span reads GG.

This sequence belongs to the triosephosphate isomerase family. In terms of assembly, homodimer.

It is found in the cytoplasm. The enzyme catalyses D-glyceraldehyde 3-phosphate = dihydroxyacetone phosphate. Its pathway is carbohydrate biosynthesis; gluconeogenesis. It participates in carbohydrate degradation; glycolysis; D-glyceraldehyde 3-phosphate from glycerone phosphate: step 1/1. Its function is as follows. Involved in the gluconeogenesis. Catalyzes stereospecifically the conversion of dihydroxyacetone phosphate (DHAP) to D-glyceraldehyde-3-phosphate (G3P). The polypeptide is Triosephosphate isomerase (Klebsiella pneumoniae).